The chain runs to 78 residues: Large ribosomal subunit protein bL28 (78 aa).

It belongs to the bacterial ribosomal protein bL28 family.

In Corynebacterium aurimucosum (strain ATCC 700975 / DSM 44827 / CIP 107346 / CN-1) (Corynebacterium nigricans), this protein is Large ribosomal subunit protein bL28.